The sequence spans 614 residues: Fem-3 mRNA-binding factor 1 (614 aa).

Positions 1–24 (MDQSKMRYTNQFRKTPQKPTSTEV) are enriched in polar residues. Residues 1–34 (MDQSKMRYTNQFRKTPQKPTSTEVGNHHTPAHSP) form a disordered region. The 405-residue stretch at 160-564 (TRSNNVLPTW…KMIETLAHLR (405 aa)) folds into the PUM-HD domain. 8 Pumilio repeats span residues 185 to 223 (EVLD…QLFE), 224 to 263 (QVIG…NIKR), 269 to 305 (NFIS…KLVQ), 306 to 342 (ALPR…EFIV), 343 to 382 (DFVA…DLTS), 398 to 434 (SVTN…CIIE), 436 to 471 (CLMR…EMMD), and 483 to 519 (TGKD…RQTK). Positions 283 to 614 (FACRVIQSSL…NLRLMRTFSP (332 aa)) are binding to gld-3 isoform A.

As to quaternary structure, interacts (via C-terminus) with gld-3 isoform A in an RNA-independent manner. Expressed specifically in the germline (at protein level).

It localises to the cytoplasm. RNA-binding protein that binds to the consensus sequence 5'-UGUGCCAUA-3' in mRNA 3'-UTRs. Involved in the control of stem cells and sex determination in the C.elegans hermaphrodite germline. May also play a role in the hermaphrodite germline proliferation and oogenesis. Binds specifically to the regulatory region of fem-3 3'-UTR and mediates the sperm/oocyte switch. Negatively regulates gld-3 expression, possibly by directly binding to two sites within the 3'-UTR of gld-3 isoform b. In association with the cye-1/cdk-2 complex, negatively regulates gld-1 expression in the distal germline cells of the mitotic zone. By binding to the 3'-UTR, represses phosphatase lip-1 expression in the distal part of the germline mitotic zone. Suppresses germline tumor formation by preventing the dedifferentiation of secondary spermatocytes. The sequence is that of Fem-3 mRNA-binding factor 1 (fbf-1) from Caenorhabditis elegans.